We begin with the raw amino-acid sequence, 317 residues long: Ribosomal protein L11 methyltransferase (317 aa).

S-adenosyl-L-methionine-binding residues include Thr-158, Gly-179, Asp-201, and Asn-244.

Belongs to the methyltransferase superfamily. PrmA family.

It localises to the cytoplasm. The enzyme catalyses L-lysyl-[protein] + 3 S-adenosyl-L-methionine = N(6),N(6),N(6)-trimethyl-L-lysyl-[protein] + 3 S-adenosyl-L-homocysteine + 3 H(+). Its function is as follows. Methylates ribosomal protein L11. This Streptococcus pyogenes serotype M12 (strain MGAS2096) protein is Ribosomal protein L11 methyltransferase.